The sequence spans 215 residues: Imidazole glycerol phosphate synthase subunit HisH (215 aa).

In terms of domain architecture, Glutamine amidotransferase type-1 spans 9–215; that stretch reads EVVLVDYGLG…QNFVDYCLER (207 aa). Catalysis depends on cysteine 85, which acts as the Nucleophile. Active-site residues include histidine 193 and glutamate 195.

In terms of assembly, heterodimer of HisH and HisF.

It localises to the cytoplasm. The enzyme catalyses 5-[(5-phospho-1-deoxy-D-ribulos-1-ylimino)methylamino]-1-(5-phospho-beta-D-ribosyl)imidazole-4-carboxamide + L-glutamine = D-erythro-1-(imidazol-4-yl)glycerol 3-phosphate + 5-amino-1-(5-phospho-beta-D-ribosyl)imidazole-4-carboxamide + L-glutamate + H(+). The catalysed reaction is L-glutamine + H2O = L-glutamate + NH4(+). It functions in the pathway amino-acid biosynthesis; L-histidine biosynthesis; L-histidine from 5-phospho-alpha-D-ribose 1-diphosphate: step 5/9. In terms of biological role, IGPS catalyzes the conversion of PRFAR and glutamine to IGP, AICAR and glutamate. The HisH subunit catalyzes the hydrolysis of glutamine to glutamate and ammonia as part of the synthesis of IGP and AICAR. The resulting ammonia molecule is channeled to the active site of HisF. The chain is Imidazole glycerol phosphate synthase subunit HisH from Natronomonas pharaonis (strain ATCC 35678 / DSM 2160 / CIP 103997 / JCM 8858 / NBRC 14720 / NCIMB 2260 / Gabara) (Halobacterium pharaonis).